Reading from the N-terminus, the 109-residue chain is uncharacterized protein (109 aa).

Residues 90–107 form a helical membrane-spanning segment; sequence IICNFWGSLLGVGIAFYQ.

It localises to the membrane. This is an uncharacterized protein from Saccharomyces cerevisiae (strain ATCC 204508 / S288c) (Baker's yeast).